A 552-amino-acid polypeptide reads, in one-letter code: Steroid transmembrane transporter SLC22A24 (552 aa).

The next 12 membrane-spanning stretches (helical) occupy residues 16-36 (FQIL…PHIL), 146-166 (SVVQ…FGYL), 174-194 (MICS…AFAP), 204-224 (FLAG…VIEW), 235-255 (TLLL…AFVI), 260-280 (TLQL…RWLV), 349-369 (IVLY…GLIF), 380-400 (LFQV…LLVM), 407-427 (ISQV…TFLD), 436-456 (ILAT…SVHF), 473-493 (ILFS…VGFS), and 495-515 (YLPW…VLLL).

This sequence belongs to the major facilitator (TC 2.A.1) superfamily. Organic cation transporter (TC 2.A.1.19) family.

The protein resides in the cell membrane. It catalyses the reaction estrone 3-sulfate(out) + glutarate(in) = estrone 3-sulfate(in) + glutarate(out). It carries out the reaction 17beta-estradiol 17-O-(beta-D-glucuronate)(out) + glutarate(in) = 17beta-estradiol 17-O-(beta-D-glucuronate)(in) + glutarate(out). The enzyme catalyses 5alpha-androstane-3alpha,17beta-diol 3-O-(beta-D-glucuronate)(out) + glutarate(in) = 5alpha-androstane-3alpha,17beta-diol 3-O-(beta-D-glucuronate)(in) + glutarate(out). The catalysed reaction is dehydroepiandrosterone 3-sulfate(out) + glutarate(in) = dehydroepiandrosterone 3-sulfate(in) + glutarate(out). It catalyses the reaction glutarate(in) + succinate(out) = glutarate(out) + succinate(in). Its function is as follows. Renal transmembrane organic anion/dicarboxylate exchanger that participates in the reabsorption of conjugated steroids, as well as bile acids, driven by an outward gradient of dicarboxylates such as glutarate or succinate. Transports androstanediol glucuronide (5alpha-androstane-3alpha,17beta-diol 3-O-(beta-D-glucuronate)), estrone 3-sulfate, and estradiol-17-glucuronide (17beta-estradiol 17-O-(beta-D-glucuronate)), but not taurocholate. The chain is Steroid transmembrane transporter SLC22A24 from Microcebus murinus (Gray mouse lemur).